The sequence spans 288 residues: UPF0761 membrane protein HS_0693 (288 aa).

Transmembrane regions (helical) follow at residues 36–56, 92–112, 127–147, 176–196, 200–220, and 240–260; these read TLAL…FPVF, QMSA…IHSI, PAIF…IVIA, LLSL…YMVV, KVSI…FTLG, and AMAT…AVLL.

Belongs to the UPF0761 family.

It is found in the cell inner membrane. The chain is UPF0761 membrane protein HS_0693 from Histophilus somni (strain 129Pt) (Haemophilus somnus).